Reading from the N-terminus, the 1255-residue chain is Stress response protein NST1 (1255 aa).

The span at 1 to 19 (MKGNRNPPPPPSGPVPPSP) shows a compositional bias: pro residues. Disordered regions lie at residues 1–214 (MKGN…SQEE), 285–379 (NHPN…SEEL), 470–525 (RAYD…RMEE), 563–898 (EAEN…PPMG), and 956–1080 (HPPP…PPFG). Over residues 50-61 (PSPTASSLAAKP) the composition is skewed to low complexity. The span at 76-86 (NRKKQKRRAKA) shows a compositional bias: basic residues. Positions 87–96 (AAKAAAERAQ) are enriched in low complexity. The span at 118–127 (ADPEDDEDEP) shows a compositional bias: acidic residues. The segment covering 151–162 (KSKKSKKKKKKN) has biased composition (basic residues). Over residues 187–196 (PILPPPPPQQ) the composition is skewed to pro residues. The span at 201-214 (MSREKIWNTNSQEE) shows a compositional bias: basic and acidic residues. Residues 330-376 (ELEGDEEEEEVEAEAEDDGEGDEEGEDVYSEDELEDDMYSEEEQEPS) show a composition bias toward acidic residues. Residues 470–481 (RAYDHPNGERYV) show a composition bias toward basic and acidic residues. Residues 488–518 (PDEEEFEDEEEEYEEDDEEEYNSPDEEDTMT) are compositionally biased toward acidic residues. A coiled-coil region spans residues 547-745 (REKVAKERQA…ERRKKEERAA (199 aa)). 2 stretches are compositionally biased toward basic and acidic residues: residues 590–630 (KKEA…AEEK) and 637–745 (QRKA…ERAA). The segment covering 770–780 (PPAPPVAPVPV) has biased composition (pro residues). Residues 811-835 (QTSQQDGSTASSGAASNSGSMASQN) show a composition bias toward low complexity. Polar residues-rich tracts occupy residues 865 to 877 (QGSA…SASP) and 983 to 1004 (RDNQ…QPIS). Positions 1067–1080 (GPRPAPGFPMPPFG) are enriched in pro residues.

Belongs to the NST1 family.

The protein resides in the cytoplasm. Its function is as follows. May act as a negative regulator of salt tolerance. In Chaetomium globosum (strain ATCC 6205 / CBS 148.51 / DSM 1962 / NBRC 6347 / NRRL 1970) (Soil fungus), this protein is Stress response protein NST1 (NST1).